Reading from the N-terminus, the 360-residue chain is Mitogen-activated protein kinase 1 (360 aa).

A2 is subject to N-acetylalanine. The region spanning 25-313 (YTNLSYIGEG…VEQALAHPYL (289 aa)) is the Protein kinase domain. S29 is modified (phosphoserine; by SGK1). Residues 31 to 39 (IGEGAYGMV) and K54 contribute to the ATP site. The active-site Proton acceptor is the D149. Phosphothreonine; by MAP2K1 and MAP2K2 is present on T185. The TXY motif lies at 185–187 (TEY). Y187 is modified (phosphotyrosine; by MAP2K1 and MAP2K2). T190 carries the phosphothreonine; by autocatalysis modification. Phosphoserine is present on residues S246 and S248. A DNA-binding region spans residues 259–277 (KARNYLLSLPHKNKVPWNR). S284 carries the phosphoserine modification. A Cytoplasmic retention motif motif is present at residues 318–322 (DPSDE). The Nuclear translocation motif motif lies at 327-333 (APFKFDM).

This sequence belongs to the protein kinase superfamily. CMGC Ser/Thr protein kinase family. MAP kinase subfamily. In terms of assembly, binds both upstream activators and downstream substrates in multimolecular complexes. This interaction inhibits its tyrosine-kinase activity. Interacts with ADAM15, ARHGEF2, ARRB2, DAPK1 (via death domain), HSF4, IER3, IPO7, NISCH, SGK1, and isoform 1 of NEK2. Interacts (via phosphorylated form) with TPR (via C-terminal region and phosphorylated form); the interaction requires dimerization of MAPK1/ERK2 and increases following EGF stimulation. Interacts with MAP2K1. Interacts with DUSP6. Interacts (phosphorylated form) with CAV2 ('Tyr-19'-phosphorylated form); the interaction, promoted by insulin, leads to nuclear location and MAPK1 activation. Interacts with MORG1, PEA15 and MKNK2. MKNK2 isoform 1 binding prevents from dephosphorylation and inactivation. Interacts with DCC. The phosphorylated form interacts with PML (isoform PML-4). Interacts with STYX. Interacts with CDK2AP2. Interacts with CAVIN4. Interacts with DUSP7; the interaction enhances DUSP7 phosphatase activity. Interacts with GIT1; this interaction is necessary for MAPK1 localization to focal adhesions. Interacts with ZNF263. Interacts with phosphoglycerate kinase PGK1; the interaction is direct, occurs under hypoxic conditions, and promotes interaction between PGK1 and PIN1. (Microbial infection) Interacts with HIV-1 Nef through its SH3 domain. Mg(2+) serves as cofactor. Phosphorylated upon KIT and FLT3 signaling. Dually phosphorylated on Thr-185 and Tyr-187, which activates the enzyme. Undergoes regulatory phosphorylation on additional residues such as Ser-246 and Ser-248 in the kinase insert domain (KID) These phosphorylations, which are probably mediated by more than one kinase, are important for binding of MAPK1/ERK2 to importin-7 (IPO7) and its nuclear translocation. In addition, autophosphorylation of Thr-190 was shown to affect the subcellular localization of MAPK1/ERK2 as well. Ligand-activated ALK induces tyrosine phosphorylation. Dephosphorylated by PTPRJ at Tyr-187. Phosphorylation on Ser-29 by SGK1 results in its activation by enhancing its interaction with MAP2K1/MEK1 and MAP2K2/MEK2. DUSP3 and DUSP6 dephosphorylate specifically MAPK1/ERK2 and MAPK3/ERK1 whereas DUSP9 dephosphorylates a broader range of MAPKs. Dephosphorylated by DUSP1 and DUSP2 at Thr-185 and Tyr-187. Post-translationally, ISGylated. In terms of processing, ubiquitinated by TRIM15 via 'Lys-63'-linked ubiquitination; leading to activation. Deubiquitinated by CYLD.

It localises to the cytoplasm. It is found in the cytoskeleton. The protein localises to the spindle. The protein resides in the nucleus. Its subcellular location is the microtubule organizing center. It localises to the centrosome. It is found in the membrane. The protein localises to the caveola. The protein resides in the cell junction. Its subcellular location is the focal adhesion. It carries out the reaction L-seryl-[protein] + ATP = O-phospho-L-seryl-[protein] + ADP + H(+). It catalyses the reaction L-threonyl-[protein] + ATP = O-phospho-L-threonyl-[protein] + ADP + H(+). With respect to regulation, phosphorylated by MAP2K1/MEK1 and MAP2K2/MEK2 on Thr-185 and Tyr-187 in response to external stimuli like insulin or NGF. Both phosphorylations are required for activity. This phosphorylation causes dramatic conformational changes, which enable full activation and interaction of MAPK1/ERK2 with its substrates. Phosphorylation on Ser-29 by SGK1 results in its activation by enhancing its interaction with MAP2K1/MEK1 and MAP2K2/MEK2. Dephosphorylated and inactivated by DUSP1, DUSP3, DUSP6 and DUSP9. Inactivated by pyrimidylpyrrole inhibitors. In terms of biological role, serine/threonine kinase which acts as an essential component of the MAP kinase signal transduction pathway. MAPK1/ERK2 and MAPK3/ERK1 are the 2 MAPKs which play an important role in the MAPK/ERK cascade. They participate also in a signaling cascade initiated by activated KIT and KITLG/SCF. Depending on the cellular context, the MAPK/ERK cascade mediates diverse biological functions such as cell growth, adhesion, survival and differentiation through the regulation of transcription, translation, cytoskeletal rearrangements. The MAPK/ERK cascade also plays a role in initiation and regulation of meiosis, mitosis, and postmitotic functions in differentiated cells by phosphorylating a number of transcription factors. About 160 substrates have already been discovered for ERKs. Many of these substrates are localized in the nucleus, and seem to participate in the regulation of transcription upon stimulation. However, other substrates are found in the cytosol as well as in other cellular organelles, and those are responsible for processes such as translation, mitosis and apoptosis. Moreover, the MAPK/ERK cascade is also involved in the regulation of the endosomal dynamics, including lysosome processing and endosome cycling through the perinuclear recycling compartment (PNRC); as well as in the fragmentation of the Golgi apparatus during mitosis. The substrates include transcription factors (such as ATF2, BCL6, ELK1, ERF, FOS, HSF4 or SPZ1), cytoskeletal elements (such as CANX, CTTN, GJA1, MAP2, MAPT, PXN, SORBS3 or STMN1), regulators of apoptosis (such as BAD, BTG2, CASP9, DAPK1, IER3, MCL1 or PPARG), regulators of translation (such as EIF4EBP1 and FXR1) and a variety of other signaling-related molecules (like ARHGEF2, DCC, FRS2 or GRB10). Protein kinases (such as RAF1, RPS6KA1/RSK1, RPS6KA3/RSK2, RPS6KA2/RSK3, RPS6KA6/RSK4, SYK, MKNK1/MNK1, MKNK2/MNK2, RPS6KA5/MSK1, RPS6KA4/MSK2, MAPKAPK3 or MAPKAPK5) and phosphatases (such as DUSP1, DUSP4, DUSP6 or DUSP16) are other substrates which enable the propagation the MAPK/ERK signal to additional cytosolic and nuclear targets, thereby extending the specificity of the cascade. Mediates phosphorylation of TPR in response to EGF stimulation. May play a role in the spindle assembly checkpoint. Phosphorylates PML and promotes its interaction with PIN1, leading to PML degradation. Phosphorylates CDK2AP2. Phosphorylates phosphoglycerate kinase PGK1 under hypoxic conditions to promote its targeting to the mitochondrion and suppress the formation of acetyl-coenzyme A from pyruvate. Acts as a transcriptional repressor. Binds to a [GC]AAA[GC] consensus sequence. Repress the expression of interferon gamma-induced genes. Seems to bind to the promoter of CCL5, DMP1, IFIH1, IFITM1, IRF7, IRF9, LAMP3, OAS1, OAS2, OAS3 and STAT1. Transcriptional activity is independent of kinase activity. In Homo sapiens (Human), this protein is Mitogen-activated protein kinase 1.